A 380-amino-acid chain; its full sequence is DNA primase small subunit PriS (380 aa).

Residues aspartate 103, aspartate 105, and aspartate 284 contribute to the active site.

Belongs to the eukaryotic-type primase small subunit family. As to quaternary structure, heterodimer of a small subunit (PriS) and a large subunit (PriL). Mg(2+) serves as cofactor. Mn(2+) is required as a cofactor.

In terms of biological role, catalytic subunit of DNA primase, an RNA polymerase that catalyzes the synthesis of short RNA molecules used as primers for DNA polymerase during DNA replication. The small subunit contains the primase catalytic core and has DNA synthesis activity on its own. Binding to the large subunit stabilizes and modulates the activity, increasing the rate of DNA synthesis while decreasing the length of the DNA fragments, and conferring RNA synthesis capability. The DNA polymerase activity may enable DNA primase to also catalyze primer extension after primer synthesis. May also play a role in DNA repair. The chain is DNA primase small subunit PriS from Methanocorpusculum labreanum (strain ATCC 43576 / DSM 4855 / Z).